Here is a 132-residue protein sequence, read N- to C-terminus: Small ribosomal subunit protein uS9 (132 aa).

This sequence belongs to the universal ribosomal protein uS9 family.

The sequence is that of Small ribosomal subunit protein uS9 from Leptospira borgpetersenii serovar Hardjo-bovis (strain JB197).